A 105-amino-acid polypeptide reads, in one-letter code: Small ribosomal subunit protein uS10c (105 aa).

The protein belongs to the universal ribosomal protein uS10 family. As to quaternary structure, part of the 30S ribosomal subunit.

It localises to the plastid. It is found in the chloroplast. In terms of biological role, involved in the binding of tRNA to the ribosomes. This is Small ribosomal subunit protein uS10c from Gracilaria tenuistipitata var. liui (Red alga).